Here is a 591-residue protein sequence, read N- to C-terminus: Protein phosphatase EYA1 (591 aa).

3 disordered regions span residues 1–95 (MEMQ…SYPH), 150–169 (GLSQ…GTSF), and 239–319 (MTSS…PDSD). Over residues 8-23 (SPHSRLSGSSESPSGP) the composition is skewed to low complexity. A compositionally biased stretch (polar residues) spans 28 to 53 (SHINSTSMTPNGTEVKTEPMSSSEIA). Low complexity predominate over residues 56-75 (AADGSLDSFSGSALGSSSFS). Pro residues predominate over residues 78 to 87 (PAHPFSPPQI). Positions 240–252 (TSSNTSPTTPSTN) are enriched in low complexity. Over residues 253–286 (ATYQLQEPPSGVTSQAVTDPTAEYSTIHSPSTPI) the composition is skewed to polar residues. A compositionally biased stretch (basic and acidic residues) spans 287 to 302 (KETDSERLRRGSDGKS). Residue Asp-327 is the Nucleophile of the active site. 3 residues coordinate Mg(2+): Asp-327, Asp-329, and Asp-555. Asp-329 (proton donor) is an active-site residue.

This sequence belongs to the HAD-like hydrolase superfamily. EYA family. Probably interacts with SIX2, SIX4 and SIX5. Interacts with H2AX in response to DNA damage. Interacts with SIX3; promotes EYA1 translocation to the nucleus. Mg(2+) is required as a cofactor. Post-translationally, sumoylated with SUMO1. In terms of tissue distribution, extensively expressed in cranial placodes, branchial arches, CNS and developing eye and nose.

The protein resides in the cytoplasm. Its subcellular location is the nucleus. The catalysed reaction is O-phospho-L-tyrosyl-[protein] + H2O = L-tyrosyl-[protein] + phosphate. It catalyses the reaction O-phospho-L-seryl-[protein] + H2O = L-seryl-[protein] + phosphate. It carries out the reaction O-phospho-L-threonyl-[protein] + H2O = L-threonyl-[protein] + phosphate. In terms of biological role, functions both as protein phosphatase and as transcriptional coactivator for SIX1, and probably also for SIX2, SIX4 and SIX5. Tyrosine phosphatase that dephosphorylates 'Tyr-142' of histone H2AX (H2AXY142ph) and promotes efficient DNA repair via the recruitment of DNA repair complexes containing MDC1. 'Tyr-142' phosphorylation of histone H2AX plays a central role in DNA repair and acts as a mark that distinguishes between apoptotic and repair responses to genotoxic stress. Its function as histone phosphatase may contribute to its function in transcription regulation during organogenesis. Also has phosphatase activity with proteins phosphorylated on Ser and Thr residues (in vitro). Required for normal embryonic development of the craniofacial and trunk skeleton, kidneys and ears. Together with SIX1, it plays an important role in hypaxial muscle development; in this it is functionally redundant with EYA2. The protein is Protein phosphatase EYA1 (Eya1) of Mus musculus (Mouse).